The primary structure comprises 4151 residues: Mycoketide-CoA synthase (4151 aa).

Residues 2 to 32 (VDQLQHATEALRKALVQVERLKRTNRALLER) are a coiled coil. The region spanning 34 to 457 (SEPIAIVGMS…GTNAHVIIEA (424 aa)) is the Ketosynthase family 3 (KS3) 1 domain. Module stretches follow at residues 35 to 2038 (EPIA…RTEL) and 2057 to 4070 (DPIA…RREL). Catalysis depends on Cys-203, which acts as the Acyl-thioester intermediate; for beta-ketoacyl synthase 1 activity. Catalysis depends on for beta-ketoacyl synthase 1 activity residues His-338 and His-379. The acyltransferase 1 stretch occupies residues 559–880 (VFVFPGQGSQ…AASAFVAGVA (322 aa)). Residue Ser-650 is the Acyl-ester intermediate; for acyltransferase 1 activity of the active site. The interval 926–1048 (HPLLGAVVDL…GILRPGSVEP (123 aa)) is N-terminal hotdog fold 1. Residues 926–1194 (HPLLGAVVDL…VARPVTERQL (269 aa)) are dehydratase 1. The region spanning 926–1195 (HPLLGAVVDL…ARPVTERQLL (270 aa)) is the PKS/mFAS DH 1 domain. His-958 acts as the Proton acceptor; for dehydratase activity 1 in catalysis. A C-terminal hotdog fold 1 region spans residues 1060-1195 (AVTVDVADGY…ARPVTERQLL (136 aa)). Asp-1120 functions as the Proton donor; for dehydratase activity 1 in the catalytic mechanism. Positions 1366–1671 (GTFENLRLEP…QARHTGKVVM (306 aa)) are enoyl reductase 1. Residues 1680–1858 (GTVLITGGTG…AISLGWGLWD (179 aa)) are beta-ketoacyl reductase 1. The active-site For beta-ketoacyl reductase 1 activity is the Tyr-1828. The Carrier 1 domain maps to 1963–2038 (AVLLGLVRLH…RLASYIRTEL (76 aa)). Ser-1998 is subject to O-(pantetheine 4'-phosphoryl)serine. The 425-residue stretch at 2056–2480 (EDPIAIVGMA…GTNAHVIIEA (425 aa)) folds into the Ketosynthase family 3 (KS3) 2 domain. Cys-2226 acts as the Acyl-thioester intermediate; for beta-ketoacyl synthase 2 activity in catalysis. Active-site for beta-ketoacyl synthase 2 activity residues include His-2361 and His-2402. The segment at 2582-2893 (VFVFPGQGSQ…AVAQGFVTGM (312 aa)) is acyltransferase 2. The Acyl-ester intermediate; for acyltransferase 2 activity role is filled by Ser-2672. Positions 2940 to 3062 (HALLGAVIDL…GALRAGSAEP (123 aa)) are N-terminal hotdog fold 2. The segment at 2940 to 3215 (HALLGAVIDL…ARPVTDQQLR (276 aa)) is dehydratase 2. Residues 2940–3215 (HALLGAVIDL…ARPVTDQQLR (276 aa)) form the PKS/mFAS DH 2 domain. Catalysis depends on His-2972, which acts as the Proton acceptor; for dehydratase activity 2. Residues 3074 to 3215 (AVPVEVADGY…ARPVTDQQLR (142 aa)) form a C-terminal hotdog fold 2 region. The Proton donor; for dehydratase activity 2 role is filled by Asp-3135. Residues 3395 to 3701 (GTFENLRLEL…QARHTGKVVM (307 aa)) form an enoyl reductase 2 region. Residues 3710–3888 (GTVLITGGTG…AISLGWGLWD (179 aa)) are beta-ketoacyl reductase 2. The active-site For beta-ketoacyl reductase 2 activity is the Tyr-3858. Residues 3995-4070 (AVLLDLVRSH…ALAGYMRREL (76 aa)) form the Carrier 2 domain. An O-(pantetheine 4'-phosphoryl)serine modification is found at Ser-4030.

Forms a large supramolecular assembly mediated through specific interactions between the N- and C-terminus linkers.

It carries out the reaction a medium-chain fatty acyl-CoA + 5 (S)-methylmalonyl-CoA + 5 malonyl-CoA + 22 NADPH + 32 H(+) = a mycoketide-CoA + 10 CO2 + 22 NADP(+) + 10 CoA + 11 H2O. It participates in lipid metabolism; fatty acid metabolism. Involved in the synthesis of beta-D-mannosyl phosphomycoketide (MPM), an antigenic mycobacterial polyketide. Binds a fatty acyl-CoA as a starter unit, and extends it by five rounds of alternative additions of malonyl-CoA and methylmalonyl-CoA extender units. Depending on the starter unit, the enzyme forms mycoketide-CoAs of different lengths. Shows preference for small-/medium-chain starter fatty acyl substrates. Uses a hybrid modularly iterative mechanism, by forming a supramolecular assembly to perform repetitive cycles of iterations. The protein is Mycoketide-CoA synthase of Mycobacterium tuberculosis (strain ATCC 25618 / H37Rv).